The following is a 569-amino-acid chain: Peroxynitrite isomerase THAP4 (569 aa).

The THAP-type zinc-finger motif lies at 1–85; sequence MVICCAAVNC…LKPTAVPSIF (85 aa). Residues 83-219 form a disordered region; the sequence is SIFHLSEKKR…GISMDDFTPP (137 aa). Residues 121–130 are compositionally biased toward polar residues; sequence IGSSLSSSDN. At S159 the chain carries Phosphoserine. Residues 196-210 show a composition bias toward low complexity; sequence ASSSAADAGGADKSG. The short motif at 230–233 is the HCFC1-binding motif (HBM) element; the sequence is LHSY. Phosphoserine is present on S234. Residues 235–312 are disordered; that stretch reads FSSKHTRERP…EAVQSEHSDA (78 aa). Residues 242–262 are compositionally biased toward basic and acidic residues; the sequence is ERPSVPREPMDRKRLKRDIEP. Positions 265 to 279 are enriched in polar residues; it reads SGNSVAQSPPSSSLT. Over residues 280 to 289 the composition is skewed to low complexity; sequence ATPQKASQSP. The tract at residues 407–569 is nitrobindin; sequence PPKLNPVVEP…LHITYKKVTP (163 aa). T436 and H559 together coordinate heme b.

This sequence in the C-terminal section; belongs to the nitrobindin family. In terms of assembly, homodimer. Heme b serves as cofactor.

The protein localises to the cytoplasm. The protein resides in the nucleus. It catalyses the reaction peroxynitrite = nitrate. Its pathway is nitrogen metabolism. Heme-binding protein able to scavenge peroxynitrite and to protect free L-tyrosine against peroxynitrite-mediated nitration, by acting as a peroxynitrite isomerase that converts peroxynitrite to nitrate. Therefore, this protein likely plays a role in peroxynitrite sensing and in the detoxification of reactive nitrogen and oxygen species (RNS and ROS, respectively). Is able to bind nitric oxide (NO) in vitro, but may act as a sensor of peroxynitrite levels in vivo, possibly modulating the transcriptional activity residing in the N-terminal region. The polypeptide is Peroxynitrite isomerase THAP4 (Rattus norvegicus (Rat)).